Here is a 411-residue protein sequence, read N- to C-terminus: Elongation factor 1-gamma (411 aa).

Residues 3–84 (LTLWSGVNPE…HIARLDRSGG (82 aa)) enclose the GST N-terminal domain. The GST C-terminal domain occupies 90–216 (TPLEGSQVDM…QGATFGAREG (127 aa)). The disordered stretch occupies residues 212-265 (GAREGGAKGQGRGCARPGREEAERAAAAADGAEEEDEAPREKKKPNPLDELPPS). The span at 214–223 (REGGAKGQGR) shows a compositional bias: gly residues. One can recognise an EF-1-gamma C-terminal domain in the interval 255-411 (KPNPLDELPP…RPVLEGRVFK (157 aa)).

EF-1 is composed of four subunits: alpha, beta, delta, and gamma.

Its function is as follows. Probably plays a role in anchoring the complex to other cellular components. This Trypanosoma cruzi protein is Elongation factor 1-gamma.